A 171-amino-acid polypeptide reads, in one-letter code: S-ribosylhomocysteine lyase (171 aa).

Histidine 54, histidine 58, and cysteine 128 together coordinate Fe cation.

The protein belongs to the LuxS family. As to quaternary structure, homodimer. Requires Fe cation as cofactor.

The catalysed reaction is S-(5-deoxy-D-ribos-5-yl)-L-homocysteine = (S)-4,5-dihydroxypentane-2,3-dione + L-homocysteine. Its function is as follows. Involved in the synthesis of autoinducer 2 (AI-2) which is secreted by bacteria and is used to communicate both the cell density and the metabolic potential of the environment. The regulation of gene expression in response to changes in cell density is called quorum sensing. Catalyzes the transformation of S-ribosylhomocysteine (RHC) to homocysteine (HC) and 4,5-dihydroxy-2,3-pentadione (DPD). In Escherichia coli O81 (strain ED1a), this protein is S-ribosylhomocysteine lyase.